Reading from the N-terminus, the 175-residue chain is Ribulose bisphosphate carboxylase small subunit, chloroplastic 2 (175 aa).

The N-terminal 46 residues, 1 to 46, are a transit peptide targeting the chloroplast; sequence MAPAVMASSATTVAPFQGLKSTAGLPISCRSGSTGLSSVSNGGRIR.

This sequence belongs to the RuBisCO small chain family. In terms of assembly, heterohexadecamer of 8 large and 8 small subunits.

The protein resides in the plastid. It is found in the chloroplast. RuBisCO catalyzes two reactions: the carboxylation of D-ribulose 1,5-bisphosphate, the primary event in carbon dioxide fixation, as well as the oxidative fragmentation of the pentose substrate. Both reactions occur simultaneously and in competition at the same active site. Although the small subunit is not catalytic it is essential for maximal activity. The sequence is that of Ribulose bisphosphate carboxylase small subunit, chloroplastic 2 from Triticum aestivum (Wheat).